Consider the following 181-residue polypeptide: MAFLIMSSAAAVATGTNAAQASMIAPFTGLKSATSFPVSRKQNLDITSIASNGGRVQCMQVWPPINKKKYETLSYLPDLSEEQLLREVEYLLKNGWVPCLEFETEHGFVYRENNKSPGYYDGRYWTMWKLPMFGCTDATQVLAEVEEAKKAYPQAWIRIIGFDNVRQVQCISFIAYKPEGY.

A chloroplast-targeting transit peptide spans 1 to 57 (MAFLIMSSAAAVATGTNAAQASMIAPFTGLKSATSFPVSRKQNLDITSIASNGGRVQ).

The protein belongs to the RuBisCO small chain family. Heterohexadecamer of 8 large and 8 small subunits.

It localises to the plastid. It is found in the chloroplast. RuBisCO catalyzes two reactions: the carboxylation of D-ribulose 1,5-bisphosphate, the primary event in carbon dioxide fixation, as well as the oxidative fragmentation of the pentose substrate. Both reactions occur simultaneously and in competition at the same active site. Although the small subunit is not catalytic it is essential for maximal activity. The sequence is that of Ribulose bisphosphate carboxylase small subunit, chloroplastic 2 from Nicotiana sylvestris (Wood tobacco).